Here is a 523-residue protein sequence, read N- to C-terminus: Glutamate--cysteine ligase, chloroplastic (523 aa).

A disulfide bridge links C187 with C407.

It belongs to the carboxylate-amine ligase family. Glutamate--cysteine ligase type 2 subfamily. As to quaternary structure, homodimer or monomer when oxidized or reduced, respectively. The Cys-187-Cys-407 disulfide bridge is known to modulate the enzyme activity according to the redox status. The oxidized form constitutes the active enzyme.

The protein resides in the plastid. Its subcellular location is the chloroplast. It carries out the reaction L-cysteine + L-glutamate + ATP = gamma-L-glutamyl-L-cysteine + ADP + phosphate + H(+). The protein operates within sulfur metabolism; glutathione biosynthesis; glutathione from L-cysteine and L-glutamate: step 1/2. This chain is Glutamate--cysteine ligase, chloroplastic (GSH1), found in Solanum lycopersicum (Tomato).